Reading from the N-terminus, the 1052-residue chain is Protein argonaute 14 (1052 aa).

Over residues 1–39 the composition is skewed to gly residues; sequence MASRGGDGLVGGGRGPLGGRDGRGRGPAGGRGGGRGGGH. Disordered stretches follow at residues 1–127 and 170–194; these read MASR…TPAV and GGRP…APPS. Low complexity predominate over residues 40 to 49; sequence PQQQQQQQPG. Composition is skewed to gly residues over residues 50–59 and 66–81; these read YGRGDGGGRG and GVVG…GGRG. Residues 97–117 show a composition bias toward low complexity; it reads VRPAMAAAPAASTPGPVAVAA. The segment covering 173 to 183 has biased composition (pro residues); it reads PAPPAAPPAPI. The 117-residue stretch at 394–510 folds into the PAZ domain; that stretch reads SVVEYVKNCL…LPMEVCTIVE (117 aa). The region spanning 677-1009 is the Piwi domain; sequence LLIVILPDVN…AAFRARYYDE (333 aa).

This sequence belongs to the argonaute family. Ago subfamily. In terms of tissue distribution, expressed in seeds.

Probably involved in the RNA silencing pathway. May bind to short RNAs such as microRNAs (miRNAs) or short interfering RNAs (siRNAs), and represses the translation of mRNAs which are complementary to them. The polypeptide is Protein argonaute 14 (AGO14) (Oryza sativa subsp. japonica (Rice)).